A 399-amino-acid polypeptide reads, in one-letter code: Formate-dependent phosphoribosylglycinamide formyltransferase (399 aa).

N(1)-(5-phospho-beta-D-ribosyl)glycinamide contacts are provided by residues 8–9 (EL) and E68. Residues R100, K141, 146 to 151 (SSGHGQ), 185 to 188 (EALA), and E193 each bind ATP. One can recognise an ATP-grasp domain in the interval 105 to 308 (VLAHEELGLP…EFALHARAIL (204 aa)). E266 and E279 together coordinate Mg(2+). Residues D286, K361, and 368–369 (RR) each bind N(1)-(5-phospho-beta-D-ribosyl)glycinamide.

This sequence belongs to the PurK/PurT family. As to quaternary structure, homodimer.

It catalyses the reaction N(1)-(5-phospho-beta-D-ribosyl)glycinamide + formate + ATP = N(2)-formyl-N(1)-(5-phospho-beta-D-ribosyl)glycinamide + ADP + phosphate + H(+). It functions in the pathway purine metabolism; IMP biosynthesis via de novo pathway; N(2)-formyl-N(1)-(5-phospho-D-ribosyl)glycinamide from N(1)-(5-phospho-D-ribosyl)glycinamide (formate route): step 1/1. In terms of biological role, involved in the de novo purine biosynthesis. Catalyzes the transfer of formate to 5-phospho-ribosyl-glycinamide (GAR), producing 5-phospho-ribosyl-N-formylglycinamide (FGAR). Formate is provided by PurU via hydrolysis of 10-formyl-tetrahydrofolate. This chain is Formate-dependent phosphoribosylglycinamide formyltransferase, found in Bifidobacterium adolescentis (strain ATCC 15703 / DSM 20083 / NCTC 11814 / E194a).